Consider the following 473-residue polypeptide: Chromosomal replication initiator protein DnaA (473 aa).

Residues 1 to 76 (MNYHSTNVNE…RTVLGRVIGP (76 aa)) are domain I, interacts with DnaA modulators. A domain II region spans residues 76–135 (PNASLQYNALVDNSSPKYPGTVTLAGCADGGQAAEQFDVNLLHRHMPNAATHSEAQDFDT). Residues 136 to 353 (QLNSRLNFRN…GTLVSLITNS (218 aa)) form a domain III, AAA+ region region. 4 residues coordinate ATP: G181, G183, K184, and T185. The domain IV, binds dsDNA stretch occupies residues 354-473 (VVVGKEIDLT…VERAEQLIAN (120 aa)).

It belongs to the DnaA family. In terms of assembly, oligomerizes as a right-handed, spiral filament on DNA at oriC.

Its subcellular location is the cytoplasm. Functionally, plays an essential role in the initiation and regulation of chromosomal replication. ATP-DnaA binds to the origin of replication (oriC) to initiate formation of the DNA replication initiation complex once per cell cycle. Binds the DnaA box (a 9 base pair repeat at the origin) and separates the double-stranded (ds)DNA. Forms a right-handed helical filament on oriC DNA; dsDNA binds to the exterior of the filament while single-stranded (ss)DNA is stabiized in the filament's interior. The ATP-DnaA-oriC complex binds and stabilizes one strand of the AT-rich DNA unwinding element (DUE), permitting loading of DNA polymerase. After initiation quickly degrades to an ADP-DnaA complex that is not apt for DNA replication. Binds acidic phospholipids. The polypeptide is Chromosomal replication initiator protein DnaA (Porphyromonas gingivalis (strain ATCC 33277 / DSM 20709 / CIP 103683 / JCM 12257 / NCTC 11834 / 2561)).